Here is a 239-residue protein sequence, read N- to C-terminus: Peptidyl-tRNA hydrolase (239 aa).

TRNA is bound at residue Tyr14. His19 serves as the catalytic Proton acceptor. Positions 64, 66, and 112 each coordinate tRNA.

It belongs to the PTH family. As to quaternary structure, monomer.

The protein localises to the cytoplasm. It catalyses the reaction an N-acyl-L-alpha-aminoacyl-tRNA + H2O = an N-acyl-L-amino acid + a tRNA + H(+). Functionally, hydrolyzes ribosome-free peptidyl-tRNAs (with 1 or more amino acids incorporated), which drop off the ribosome during protein synthesis, or as a result of ribosome stalling. Its function is as follows. Catalyzes the release of premature peptidyl moieties from peptidyl-tRNA molecules trapped in stalled 50S ribosomal subunits, and thus maintains levels of free tRNAs and 50S ribosomes. In Rhizobium meliloti (strain 1021) (Ensifer meliloti), this protein is Peptidyl-tRNA hydrolase.